Here is a 324-residue protein sequence, read N- to C-terminus: UDP-N-acetylenolpyruvoylglucosamine reductase (324 aa).

The FAD-binding PCMH-type domain maps to 36–203; sequence FRAGGLAELM…TSVLFEGYPE (168 aa). R183 is a catalytic residue. S232 (proton donor) is an active-site residue. E302 is a catalytic residue.

Belongs to the MurB family. The cofactor is FAD.

The protein localises to the cytoplasm. It carries out the reaction UDP-N-acetyl-alpha-D-muramate + NADP(+) = UDP-N-acetyl-3-O-(1-carboxyvinyl)-alpha-D-glucosamine + NADPH + H(+). Its pathway is cell wall biogenesis; peptidoglycan biosynthesis. In terms of biological role, cell wall formation. The chain is UDP-N-acetylenolpyruvoylglucosamine reductase from Rhizobium johnstonii (strain DSM 114642 / LMG 32736 / 3841) (Rhizobium leguminosarum bv. viciae).